The following is a 239-amino-acid chain: Small ribosomal subunit protein uS3 (239 aa).

The 69-residue stretch at 39-107 folds into the KH type-2 domain; the sequence is VREFLRKKLA…ATSINIEEIR (69 aa). Residues 215–239 are disordered; the sequence is TSNTNELSDEKRNRRKPRNANRRKE. A compositionally biased stretch (basic residues) spans 227–239; it reads NRRKPRNANRRKE.

Belongs to the universal ribosomal protein uS3 family. Part of the 30S ribosomal subunit. Forms a tight complex with proteins S10 and S14.

Functionally, binds the lower part of the 30S subunit head. Binds mRNA in the 70S ribosome, positioning it for translation. The sequence is that of Small ribosomal subunit protein uS3 from Dichelobacter nodosus (strain VCS1703A).